Reading from the N-terminus, the 297-residue chain is 4-hydroxy-tetrahydrodipicolinate synthase (297 aa).

Threonine 49 is a binding site for pyruvate. The Proton donor/acceptor role is filled by tyrosine 137. Lysine 166 serves as the catalytic Schiff-base intermediate with substrate. Isoleucine 208 is a pyruvate binding site.

Belongs to the DapA family. As to quaternary structure, homotetramer; dimer of dimers.

The protein resides in the cytoplasm. It catalyses the reaction L-aspartate 4-semialdehyde + pyruvate = (2S,4S)-4-hydroxy-2,3,4,5-tetrahydrodipicolinate + H2O + H(+). It participates in amino-acid biosynthesis; L-lysine biosynthesis via DAP pathway; (S)-tetrahydrodipicolinate from L-aspartate: step 3/4. Catalyzes the condensation of (S)-aspartate-beta-semialdehyde [(S)-ASA] and pyruvate to 4-hydroxy-tetrahydrodipicolinate (HTPA). The polypeptide is 4-hydroxy-tetrahydrodipicolinate synthase (Porphyromonas gingivalis (strain ATCC 33277 / DSM 20709 / CIP 103683 / JCM 12257 / NCTC 11834 / 2561)).